The sequence spans 604 residues: Acetylcholinesterase 4 (604 aa).

The first 23 residues, 1–23, serve as a signal peptide directing secretion; the sequence is MKPKLVFLPFLIFITVFIEESEA. Cys88 and Cys115 are joined by a disulfide. Asn96 and Asn128 each carry an N-linked (GlcNAc...) asparagine glycan. Residue Ser219 is the Acyl-ester intermediate of the active site. Cysteines 273 and 284 form a disulfide. N-linked (GlcNAc...) asparagine glycosylation is found at Asn274 and Asn299. Glu347 functions as the Charge relay system in the catalytic mechanism. Residues Asn400 and Asn446 are each glycosylated (N-linked (GlcNAc...) asparagine). A disulfide bridge links Cys426 with Cys561. His477 functions as the Charge relay system in the catalytic mechanism.

The protein belongs to the type-B carboxylesterase/lipase family.

It localises to the synapse. It is found in the secreted. Its subcellular location is the cell membrane. The enzyme catalyses acetylcholine + H2O = choline + acetate + H(+). Its function is as follows. Rapidly hydrolyzes choline released into the synapse. The sequence is that of Acetylcholinesterase 4 (ace-4) from Caenorhabditis briggsae.